The primary structure comprises 395 residues: Flap endonuclease 1 (395 aa).

The segment at 1-108 (MGILGLSKLL…DELEMRRQKA (108 aa)) is N-domain. D34 provides a ligand contact to Mg(2+). R74 provides a ligand contact to DNA. Residue D90 coordinates Mg(2+). The disordered stretch occupies residues 116–136 (EKAKDAGDDEMMEKMSKRTVR). The interval 126–257 (MMEKMSKRTV…QKAWEGIQRY (132 aa)) is I-domain. Residues E162, E164, D183, and D185 each contribute to the Mg(2+) site. A DNA-binding site is contributed by E162. The DNA site is built by G235 and D237. Mg(2+) is bound at residue D237. Positions 340 to 348 (TQGRLDSFF) are interaction with PCNA.

This sequence belongs to the XPG/RAD2 endonuclease family. FEN1 subfamily. In terms of assembly, interacts with PCNA. Three molecules of FEN1 bind to one PCNA trimer with each molecule binding to one PCNA monomer. PCNA stimulates the nuclease activity without altering cleavage specificity. Mg(2+) serves as cofactor. Post-translationally, phosphorylated. Phosphorylation upon DNA damage induces relocalization to the nuclear plasma.

The protein localises to the nucleus. The protein resides in the nucleolus. It localises to the nucleoplasm. Its subcellular location is the mitochondrion. Functionally, structure-specific nuclease with 5'-flap endonuclease and 5'-3' exonuclease activities involved in DNA replication and repair. During DNA replication, cleaves the 5'-overhanging flap structure that is generated by displacement synthesis when DNA polymerase encounters the 5'-end of a downstream Okazaki fragment. It enters the flap from the 5'-end and then tracks to cleave the flap base, leaving a nick for ligation. Also involved in the long patch base excision repair (LP-BER) pathway, by cleaving within the apurinic/apyrimidinic (AP) site-terminated flap. Acts as a genome stabilization factor that prevents flaps from equilibrating into structures that lead to duplications and deletions. Also possesses 5'-3' exonuclease activity on nicked or gapped double-stranded DNA, and exhibits RNase H activity. Also involved in replication and repair of rDNA and in repairing mitochondrial DNA. This chain is Flap endonuclease 1, found in Leishmania major.